The sequence spans 423 residues: 3-phosphoshikimate 1-carboxyvinyltransferase (423 aa).

Positions 19, 20, and 24 each coordinate 3-phosphoshikimate. Lysine 19 serves as a coordination point for phosphoenolpyruvate. Glycine 89 and arginine 118 together coordinate phosphoenolpyruvate. Residues serine 164, serine 165, glutamine 166, serine 192, aspartate 304, and lysine 331 each coordinate 3-phosphoshikimate. Glutamine 166 lines the phosphoenolpyruvate pocket. The Proton acceptor role is filled by aspartate 304. The phosphoenolpyruvate site is built by arginine 335 and arginine 377.

This sequence belongs to the EPSP synthase family. In terms of assembly, monomer.

Its subcellular location is the cytoplasm. The catalysed reaction is 3-phosphoshikimate + phosphoenolpyruvate = 5-O-(1-carboxyvinyl)-3-phosphoshikimate + phosphate. The protein operates within metabolic intermediate biosynthesis; chorismate biosynthesis. Its function is as follows. Catalyzes the transfer of the enolpyruvyl moiety of phosphoenolpyruvate (PEP) to the 5-hydroxyl of shikimate-3-phosphate (S3P) to produce enolpyruvyl shikimate-3-phosphate and inorganic phosphate. This is 3-phosphoshikimate 1-carboxyvinyltransferase from Korarchaeum cryptofilum (strain OPF8).